Here is a 449-residue protein sequence, read N- to C-terminus: Na(+)/H(+) antiporter NhaA (449 aa).

12 helical membrane-spanning segments follow: residues 30–50, 69–89, 112–132, 138–158, 168–188, 192–212, 218–238, 241–261, 312–332, 348–368, 386–406, and 419–439; these read IFLIIATIVALLLANSQWAGA, FGLTIEEWINDGLMAIFFLVA, LLAALGGMAVPALIFISLNLG, GWGIPMATDIAYSLGIIGLLG, FLIALAIADDIGAILVIALFY, LSWIYLGSGMGAFGLLLLMNW, LIWYIIIGIILWYCFLNSGIH, IAGVLFAITIPIVPKLDSKIL, SLVDFNAFFIIPIFAVANAGV, LGILLGLAIGKVTGIGIFTLI, IIGIGMIAGIGFTMSLFITNL, and ISILIASLLAAIGGAVILLLT.

This sequence belongs to the NhaA Na(+)/H(+) (TC 2.A.33) antiporter family.

The protein localises to the cell inner membrane. The catalysed reaction is Na(+)(in) + 2 H(+)(out) = Na(+)(out) + 2 H(+)(in). In terms of biological role, na(+)/H(+) antiporter that extrudes sodium in exchange for external protons. The chain is Na(+)/H(+) antiporter NhaA from Christiangramia forsetii (strain DSM 17595 / CGMCC 1.15422 / KT0803) (Gramella forsetii).